A 467-amino-acid polypeptide reads, in one-letter code: MMIKIFDSVKREKVEFIPLKKGEVSLYVCGPTVYDDSHLGHARSAIAFDLLRRLMEFEGYRVRFVKNFTDIDDKIIKKSLESGEEIGAITERYITSYLEDMQKLGIKRPDIEPRATESLDLMWEMIQSLLQKGIAYQTPRGDIYLDVKQDPSYGKLSGRGEDLEQVSRIESSEEKRDPRDFALWKSYKGQSDVGYESPFGRGRPGWHIECSAMIEKHLAKEGDYAIDIHAGGSDLLFPHHENEACQTRCATGRELAKYWMHNGFVTINGEKMSKSLGNSFFVKDALRVYDGEVLRFYLLSTHYRMGLNFSEEDLLASKKRLDRLYRLKKRVGEGEVGAPSEKFLERLLEGLRDDMNISRALSAMDEMLTLSNEELDSSPKERALQATIRGNLEVLERLLGIGAKSPILYFQMGVSPEEKEKIEELIKERAEAKKAKDFARADEIRKSLSDQGIALLDTPSGTLWERA.

C29 provides a ligand contact to Zn(2+). The 'HIGH' region motif lies at P31–H41. Positions K155–E174 are disordered. Over residues G158 to E174 the composition is skewed to basic and acidic residues. 3 residues coordinate Zn(2+): C210, H239, and E243. The 'KMSKS' region signature appears at K271–S275. Position 274 (K274) interacts with ATP.

This sequence belongs to the class-I aminoacyl-tRNA synthetase family. In terms of assembly, monomer. It depends on Zn(2+) as a cofactor.

It localises to the cytoplasm. The catalysed reaction is tRNA(Cys) + L-cysteine + ATP = L-cysteinyl-tRNA(Cys) + AMP + diphosphate. This chain is Cysteine--tRNA ligase, found in Wolinella succinogenes (strain ATCC 29543 / DSM 1740 / CCUG 13145 / JCM 31913 / LMG 7466 / NCTC 11488 / FDC 602W) (Vibrio succinogenes).